A 416-amino-acid chain; its full sequence is Lipase A (416 aa).

Residues 1-32 (MRLAPQKPLLLSTVLHLLLSIWMLGFASLAGA) form the signal peptide. Intrachain disulfides connect Cys-67–Cys-391 and Cys-177–Cys-180. Asn-179 carries N-linked (GlcNAc...) asparagine glycosylation. Catalysis depends on Ser-219, which acts as the Nucleophile. Active-site charge relay system residues include Asp-287 and His-381.

Belongs to the AB hydrolase superfamily. Lipase family. In terms of processing, glycosylated.

Its subcellular location is the secreted. It carries out the reaction Deacetylation of xylans and xylo-oligosaccharides.. The enzyme catalyses a triacylglycerol + H2O = a diacylglycerol + a fatty acid + H(+). Its function is as follows. Lipolytic enzyme that possesses both lipase and acetylxylan esterase activity. Active towards p-nitrophenol esters of various carbon chain length with preference for medium-chain fatty acids (C-8). Also highly active on the acetylated compounds xylose tetra-acetate and oat spelt xylan. This chain is Lipase A, found in Sodiomyces alcalophilus (Acremonium alcalophilum).